The sequence spans 406 residues: Serine/threonine transporter SstT (406 aa).

A run of 9 helical transmembrane segments spans residues 11–31 (IGLV…GWLM), 45–65 (FVGA…MAAI), 79–99 (VLIM…VASF), 141–161 (AIAN…GLAL), 185–205 (FVIA…IAET), 216–236 (LLTI…PIIV), 298–318 (MAGA…TLGV), 330–350 (VVAT…LLLI), and 357–377 (FNIP…IGVV).

It belongs to the dicarboxylate/amino acid:cation symporter (DAACS) (TC 2.A.23) family.

It localises to the cell inner membrane. The catalysed reaction is L-serine(in) + Na(+)(in) = L-serine(out) + Na(+)(out). The enzyme catalyses L-threonine(in) + Na(+)(in) = L-threonine(out) + Na(+)(out). Functionally, involved in the import of serine and threonine into the cell, with the concomitant import of sodium (symport system). The sequence is that of Serine/threonine transporter SstT from Psychrobacter sp. (strain PRwf-1).